The sequence spans 154 residues: Aspartate carbamoyltransferase regulatory chain (154 aa).

Cysteine 109, cysteine 114, cysteine 138, and cysteine 141 together coordinate Zn(2+).

Belongs to the PyrI family. In terms of assembly, contains catalytic and regulatory chains. Requires Zn(2+) as cofactor.

Involved in allosteric regulation of aspartate carbamoyltransferase. This Sodalis glossinidius (strain morsitans) protein is Aspartate carbamoyltransferase regulatory chain.